Consider the following 142-residue polypeptide: Hemoglobin subunit alpha (142 aa).

The Globin domain occupies valine 2 to arginine 142. Histidine 59 is a binding site for O2. Histidine 88 contacts heme b.

This sequence belongs to the globin family. Heterotetramer of two alpha chains and two beta chains. Red blood cells.

Functionally, involved in oxygen transport from the lung to the various peripheral tissues. The protein is Hemoglobin subunit alpha (HBA) of Aptenodytes forsteri (Emperor penguin).